Consider the following 2183-residue polypeptide: Genome polyprotein (2183 aa).

Residue glycine 2 is the site of N-myristoyl glycine; by host attachment. Topologically, residues 2-1493 (GAQVSTQKTG…HVSRAFICLQ (1492 aa)) are cytoplasmic. The segment at 566-582 (FYQGPTEESVERAMGRV) is amphipathic alpha-helix. Catalysis depends on for protease 2A activity residues histidine 870 and aspartate 888. Cysteine 905 and cysteine 907 together coordinate Zn(2+). The active-site For protease 2A activity is cysteine 959. Positions 965 and 967 each coordinate Zn(2+). The interval 1099-1171 (NNGWLKKFTE…EQSAPSQSDQ (73 aa)) is membrane-binding. The oligomerization stretch occupies residues 1099 to 1237 (NNGWLKKFTE…SPGAGKSVAT (139 aa)). The interval 1120–1124 (AVKIQ) is RNA-binding. Residues 1203-1359 (EKKMSNYIQF…SMYSQNGKIN (157 aa)) form the SF3 helicase domain. Cysteine 1367, cysteine 1379, and cysteine 1384 together coordinate Zn(2+). The C4-type; degenerate zinc finger occupies 1367 to 1384 (CDEECCPVNFKRCCPLVC). Positions 1411–1418 (EYNHRHSV) are RNA-binding. Residues 1422-1427 (LEALFQ) are oligomerization. An intramembrane segment occupies 1494–1509 (ALTTFVSVAGIIYIIY). Topologically, residues 1510–2183 (KLFAGFQGAY…TLRRKWLDSF (674 aa)) are cytoplasmic. O-(5'-phospho-RNA)-tyrosine is present on tyrosine 1519. The 179-residue stretch at 1539 to 1717 (GPAFEFAVAM…FSAGLLKHYF (179 aa)) folds into the Peptidase C3 domain. Residues histidine 1578, glutamate 1609, and cysteine 1685 each act as for protease 3C activity in the active site. Residues 1948-2064 (GHLIAFDYSG…SYPWPIDASL (117 aa)) enclose the RdRp catalytic domain. The Mg(2+) site is built by aspartate 1954 and aspartate 2050.

Belongs to the picornaviruses polyprotein family. As to quaternary structure, interacts with capsid protein VP1 and capsid protein VP3 to form heterotrimeric protomers. In terms of assembly, interacts with capsid protein VP0, and capsid protein VP3 to form heterotrimeric protomers. Five protomers subsequently associate to form pentamers which serve as building blocks for the capsid. Interacts with capsid protein VP2, capsid protein VP3 and capsid protein VP4 following cleavage of capsid protein VP0. Interacts with host CXADR. Interacts with capsid protein VP1 and capsid protein VP3 in the mature capsid. As to quaternary structure, interacts with capsid protein VP0 and capsid protein VP1 to form heterotrimeric protomers. Five protomers subsequently associate to form pentamers which serve as building blocks for the capsid. Interacts with capsid protein VP4 in the mature capsid. Interacts with protein 2C; this interaction may be important for virion morphogenesis. In terms of assembly, interacts with capsid protein VP1 and capsid protein VP3. Homodimer. As to quaternary structure, homohexamer; forms a hexameric ring structure with 6-fold symmetry characteristic of AAA+ ATPases. Interacts (via N-terminus) with host RTN3 (via reticulon domain); this interaction is important for viral replication. Interacts with capsid protein VP3; this interaction may be important for virion morphogenesis. In terms of assembly, interacts with protein 3CD. Homodimer. Interacts with host GBF1. Interacts (via GOLD domain) with host ACBD3 (via GOLD domain); this interaction allows the formation of a viral protein 3A/ACBD3 heterotetramer with a 2:2 stoichiometry, which will stimulate the recruitment of host PI4KB in order to synthesize PI4P at the viral RNA replication sites. As to quaternary structure, interacts with RNA-directed RNA polymerase. In terms of assembly, interacts with protein 3AB and with RNA-directed RNA polymerase. Interacts with Viral protein genome-linked and with protein 3CD. It depends on Mg(2+) as a cofactor. Post-translationally, specific enzymatic cleavages in vivo by the viral proteases yield processing intermediates and the mature proteins. In terms of processing, myristoylation is required for the formation of pentamers during virus assembly. Further assembly of 12 pentamers and a molecule of genomic RNA generates the provirion. During virion maturation, immature virions are rendered infectious following cleavage of VP0 into VP4 and VP2. This maturation seems to be an autocatalytic event triggered by the presence of RNA in the capsid and it is followed by a conformational change infectious virion. Post-translationally, myristoylation is required during RNA encapsidation and formation of the mature virus particle. In terms of processing, VPg is uridylylated by the polymerase into VPg-pUpU. This acts as a nucleotide-peptide primer for the genomic RNA replication.

It is found in the virion. The protein resides in the host cytoplasm. Its subcellular location is the host cytoplasmic vesicle membrane. The protein localises to the host nucleus. It catalyses the reaction a ribonucleoside 5'-triphosphate + H2O = a ribonucleoside 5'-diphosphate + phosphate + H(+). The enzyme catalyses Selective cleavage of Tyr-|-Gly bond in the picornavirus polyprotein.. The catalysed reaction is RNA(n) + a ribonucleoside 5'-triphosphate = RNA(n+1) + diphosphate. It carries out the reaction Selective cleavage of Gln-|-Gly bond in the poliovirus polyprotein. In other picornavirus reactions Glu may be substituted for Gln, and Ser or Thr for Gly.. Its activity is regulated as follows. Replication or transcription is subject to high level of random mutations by the nucleotide analog ribavirin. Its function is as follows. Forms an icosahedral capsid of pseudo T=3 symmetry with capsid proteins VP2 and VP3. The capsid is 300 Angstroms in diameter, composed of 60 copies of each capsid protein and enclosing the viral positive strand RNA genome. Capsid protein VP1 mainly forms the vertices of the capsid. Capsid protein VP1 interacts with host CXADR to provide virion attachment to target host cells. This attachment induces virion internalization. Tyrosine kinases are probably involved in the entry process. After binding to its receptor, the capsid undergoes conformational changes. Capsid protein VP1 N-terminus (that contains an amphipathic alpha-helix) and capsid protein VP4 are externalized. Together, they shape a pore in the host membrane through which viral genome is translocated to host cell cytoplasm. In terms of biological role, forms an icosahedral capsid of pseudo T=3 symmetry with capsid proteins VP2 and VP3. The capsid is 300 Angstroms in diameter, composed of 60 copies of each capsid protein and enclosing the viral positive strand RNA genome. Lies on the inner surface of the capsid shell. After binding to the host receptor, the capsid undergoes conformational changes. Capsid protein VP4 is released, Capsid protein VP1 N-terminus is externalized, and together, they shape a pore in the host membrane through which the viral genome is translocated into the host cell cytoplasm. Functionally, component of immature procapsids, which is cleaved into capsid proteins VP4 and VP2 after maturation. Allows the capsid to remain inactive before the maturation step. Its function is as follows. Cysteine protease that cleaves viral polyprotein and specific host proteins. It is responsible for the autocatalytic cleavage between the P1 and P2 regions, which is the first cleavage occurring in the polyprotein. Also cleaves the host translation initiation factor EIF4G1, in order to shut down the capped cellular mRNA translation. Inhibits the host nucleus-cytoplasm protein and RNA trafficking by cleaving host members of the nuclear pores. Counteracts stress granule formation probably by antagonizing its assembly or promoting its dissassembly. Cleaves and inhibits host IFIH1/MDA5, thereby inhibiting the type-I IFN production and the establishment of the antiviral state. Cleaves and inhibits host MAVS, thereby inhibiting the type-I IFN production and the establishment of the antiviral state. In terms of biological role, plays an essential role in the virus replication cycle by acting as a viroporin. Creates a pore in the host endoplasmic reticulum and as a consequence releases Ca2+ in the cytoplasm of infected cell. In turn, high levels of cytoplasmic calcium may trigger membrane trafficking and transport of viral ER-associated proteins to viroplasms, sites of viral genome replication. Induces and associates with structural rearrangements of intracellular membranes. Displays RNA-binding, nucleotide binding and NTPase activities. May play a role in virion morphogenesis and viral RNA encapsidation by interacting with the capsid protein VP3. Functionally, localizes the viral replication complex to the surface of membranous vesicles. Together with protein 3CD binds the Cis-Active RNA Element (CRE) which is involved in RNA synthesis initiation. Acts as a cofactor to stimulate the activity of 3D polymerase, maybe through a nucleid acid chaperone activity. Its function is as follows. Localizes the viral replication complex to the surface of membranous vesicles. It inhibits host cell endoplasmic reticulum-to-Golgi apparatus transport and causes the disassembly of the Golgi complex, possibly through GBF1 interaction. This would result in depletion of MHC, trail receptors and IFN receptors at the host cell surface. Plays an essential role in viral RNA replication by recruiting ACBD3 and PI4KB at the viral replication sites, thereby allowing the formation of the rearranged membranous structures where viral replication takes place. In terms of biological role, acts as a primer for viral RNA replication and remains covalently bound to viral genomic RNA. VPg is uridylylated prior to priming replication into VPg-pUpU. The oriI viral genomic sequence may act as a template for this. The VPg-pUpU is then used as primer on the genomic RNA poly(A) by the RNA-dependent RNA polymerase to replicate the viral genome. During genome replication, the VPg-RNA linkage is removed by the host TDP2, thereby accelerating replication. During the late stage of the replication cycle, host TDP2 is excluded from sites of viral RNA synthesis and encapsidation, allowing for the generation of progeny virions. Involved in the viral replication complex and viral polypeptide maturation. It exhibits protease activity with a specificity and catalytic efficiency that is different from protease 3C. Protein 3CD lacks polymerase activity. Protein 3CD binds to the 5'UTR of the viral genome. Functionally, replicates the viral genomic RNA on the surface of intracellular membranes. May form linear arrays of subunits that propagate along a strong head-to-tail interaction called interface-I. Covalently attaches UMP to a tyrosine of VPg, which is used to prime RNA synthesis. The positive stranded RNA genome is first replicated at virus induced membranous vesicles, creating a dsRNA genomic replication form. This dsRNA is then used as template to synthesize positive stranded RNA genomes. ss(+)RNA genomes are either translated, replicated or encapsidated. Its function is as follows. Major viral protease that mediates proteolytic processing of the polyprotein. Cleaves host EIF5B, contributing to host translation shutoff. Also cleaves host PABPC1, contributing to host translation shutoff. Cleaves host NLRP1, triggers host N-glycine-mediated degradation of the autoinhibitory NLRP1 N-terminal fragment. This Coxsackievirus B4 (strain JVB / Benschoten / New York/51) protein is Genome polyprotein.